Reading from the N-terminus, the 181-residue chain is Ribosome maturation factor RimM (181 aa).

Residues 103-181 form the PRC barrel domain; sequence EGDYYWSQLE…EMVVDWDPEF (79 aa).

Belongs to the RimM family. In terms of assembly, binds ribosomal protein uS19.

The protein localises to the cytoplasm. Its function is as follows. An accessory protein needed during the final step in the assembly of 30S ribosomal subunit, possibly for assembly of the head region. Essential for efficient processing of 16S rRNA. May be needed both before and after RbfA during the maturation of 16S rRNA. It has affinity for free ribosomal 30S subunits but not for 70S ribosomes. This is Ribosome maturation factor RimM from Marinomonas sp. (strain MWYL1).